We begin with the raw amino-acid sequence, 883 residues long: Translation initiation factor IF-2 (883 aa).

Residues 1–259 (MVDTKTPGDK…GASKQRGRLT (259 aa)) form a disordered region. Low complexity-rich tracts occupy residues 10 to 22 (KTLT…LTLK) and 77 to 89 (PRQQ…PQQS). Positions 113–184 (ARVREIEERK…GDAEPAKKPA (72 aa)) are enriched in basic and acidic residues. Over residues 185–218 (ETSTTTTTAAPARPATTTTRTPTPAGRPPAVAAE) the composition is skewed to low complexity. The span at 235-244 (PARPAPPPKQ) shows a compositional bias: pro residues. The 170-residue stretch at 379 to 548 (PRSPVVTVMG…MIALQAEILE (170 aa)) folds into the tr-type G domain. Positions 388-395 (GHVDHGKT) are G1. A GTP-binding site is contributed by 388–395 (GHVDHGKT). The interval 413–417 (GITQH) is G2. Positions 436–439 (DTPG) are G3. GTP is bound by residues 436–440 (DTPGH) and 490–493 (NKID). The G4 stretch occupies residues 490–493 (NKID). The segment at 526–528 (SAK) is G5.

It belongs to the TRAFAC class translation factor GTPase superfamily. Classic translation factor GTPase family. IF-2 subfamily.

The protein resides in the cytoplasm. Its function is as follows. One of the essential components for the initiation of protein synthesis. Protects formylmethionyl-tRNA from spontaneous hydrolysis and promotes its binding to the 30S ribosomal subunits. Also involved in the hydrolysis of GTP during the formation of the 70S ribosomal complex. In Rhodopseudomonas palustris (strain ATCC BAA-98 / CGA009), this protein is Translation initiation factor IF-2.